We begin with the raw amino-acid sequence, 1035 residues long: NACHT, LRR and PYD domains-containing protein 3 (1035 aa).

Residues 1–93 enclose the Pyrin domain; sequence MKMMSVRCKL…WEKAKKDQPE (93 aa). Phosphoserine is present on Ser5. An intrachain disulfide couples Cys8 to Cys106. Residue Tyr13 is modified to Phosphotyrosine. A lipid anchor (S-palmitoyl cysteine) is attached at Cys128. The segment at 129 to 132 is required for binding to phosphatidylinositol 4-phosphate (PtdIns4P); the sequence is KKKK. 2 positions are modified to phosphotyrosine: Tyr134 and Tyr138. In terms of domain architecture, FISNA spans 138-208; it reads YRRHVRSRFY…SSLKLELLFE (71 aa). At Ser159 the chain carries Phosphoserine. Tyr166 is modified (phosphotyrosine). Position 167 (Thr167) interacts with ATP. Position 199 is a phosphoserine (Ser199). In terms of domain architecture, NACHT spans 218-534; sequence HTVVFQGAAG…EFFAAMYYLL (317 aa). Residue 224 to 231 coordinates ATP; it reads GAAGIGKT. A phosphoserine mark is found at Ser263 and Ser293. Lys322 participates in a covalent cross-link: Glycyl lysine isopeptide (Lys-Gly) (interchain with G-Cter in ubiquitin). Ser332 carries the phosphoserine modification. A KFERQ-like motif 1 motif is present at residues 353-357; sequence LEKLQ. Lys428 participates in a covalent cross-link: Glycyl lysine isopeptide (Lys-Gly) (interchain with G-Cter in ubiquitin). His520 serves as a coordination point for ATP. The KFERQ-like motif 2 signature appears at 603–607; the sequence is QVRLE. Residue Lys689 forms a Glycyl lysine isopeptide (Lys-Gly) (interchain with G-Cter in ubiquitin) linkage. Phosphoserine is present on residues Ser727 and Ser734. LRR repeat units follow at residues 741–761, 770–791, 798–818, 827–848, and 855–875; these read SLTE…RVLC, NIQR…NISS, KLVE…RLLC, NLQK…DLAL, and SLTR…QVLC. Positions 797-801 match the KFERQ-like motif 3 motif; the sequence is QKLVE. Residue Ser805 is modified to Phosphoserine. Residues Cys836, Cys837, and Cys843 are each lipidated (S-palmitoyl cysteine). The residue at position 860 (Tyr860) is a Phosphotyrosine. Residue Lys877 forms a Glycyl lysine isopeptide (Lys-Gly) (interchain with G-Cter in ubiquitin) linkage. LRR repeat units lie at residues 884–905, 912–932, 941–962, and 969–990; these read NLQK…ALTS, NLTH…KLLC, KLQM…DLST, and SLRK…TLCE. The S-palmitoyl cysteine moiety is linked to residue Cys957. Lys972 participates in a covalent cross-link: Glycyl lysine isopeptide (Lys-Gly) (interchain with G-Cter in ubiquitin). Residues 990 to 994 carry the KFERQ-like motif 4 motif; that stretch reads EVLKQ. Ser1034 is subject to Phosphoserine.

The protein belongs to the NLRP family. Sensor component of NLRP3 inflammasomes; inflammasomes are supramolecular complexes that assemble in the cytosol in response to pathogens and other damage-associated signals and play critical roles in innate immunity and inflammation. The core of NLRP3 inflammasomes consists of a signal sensor component (NLRP3), an adapter (PYCARD/ASC), which recruits an effector pro-inflammatory caspase (CASP1 and, possibly, CASP4 and CASP5). Homodecamer; inactive NLRP3 forms homodecameric double-ring cages that hide pyrin domains within NACHT-LRR rings to avoid premature activation. Interacts (via pyrin domain) with PYCARD/ASC (via pyrin domain); interaction is direct. Interacts (via LRR repeat domain) with NEK7 (via N-terminus); the interaction is required for the formation of the complex NLRP3:PYCARD, oligomerization of PYCARD/ASC and activation of CASP1. Interacts (via LRR repeat domain) with NR4A1/Nur77 (via N-terminus); the interaction is direct, requires activation of NR4A1 by its ligands NBRE-containing dsDNA and lipopolysaccharide, and stimulates the association of NLRP3 with NEK7 for non-canonical NLRP3 inflammasome activation. Interacts with CARD8; leading to inhibit formation of the NLRP3 inflammasome. Interacts with MEFV; this interaction targets NLRP3 to degradation by autophagy, hence preventing excessive IL1B- and IL18-mediated inflammation. Interacts with EIF2AK2/PKR; this interaction requires EIF2AK2 activity, is accompanied by EIF2AK2 autophosphorylation and promotes inflammasome assembly in response to specific stimuli. Interacts with GBP5 (via DAPIN domain); this interaction promotes inflammasome assembly in response to microbial and soluble, but not crystalline, agents. Interacts with PML (isoform PML-1) (via the leucine-rich repeat (LRR) domain); PML-mediated increase in NLRP3 inflammasome activation does not depend upon this interaction. Interacts (via NACHT domain) with DHX33 (via DEAH box); NLRP3 activation in presence of cytosolic dsRNA is mediated by DHX33. Interacts (via NACHT and LRR domains) with ARRB2; this interaction is direct and inducible by polyunsaturated fatty acids (PUFAs). Interacts (via NACHT domain) with DDX3X under both LPS-primed and inflammasome-activating conditions. Interacts with IRF4 (via the LRR domain); this interaction is direct and is required for optimal IRF4 binding to IL4 promoter and efficient IL4 transactivation during differentiation of Th2 helper T-cells. Interacts with MAVS; promoting localization to mitochondria and activation of the NLRP3 inflammasome. Interacts with MARK4; promoting localization of NLRP3 to the microtubule organizing center (MTOC). Interacts with TRIM50; this interaction also promotes NLRP3 oligomerization and subsequent inflammasome activation. Interacts with IRGM; preventing NLRP3 inflammasome assembly and promoting NLRP3 degradation. Interacts (via NACHT and LLR domains) with ABHD8; this interaction is enhanced in the presence of NLRP3 inflammasome inducers, such as ATP, nigericin, silica, or alum. Interaction with ABHD8 leads the recruitment of ZDHHC12, hence facilitating NLRP3 palmitoylation and degradation by the chaperone-mediated autophagy pathway (CMA), therefore attenuating NLRP3 inflammasome activation. Post-translationally, phosphorylation by MAPK8/JNK1 increases inflammasome activation by promoting deubiquitination by BRCC3 and NLRP3 homooligomerization. Phosphorylation at Ser-805 by CSNK1A1 prevents inflammasome activation by preventing NEK7 recruitment. Phosphorylation at Ser-5 in the pyrin domain inhibits homomultimerization of NLRP3 and activation of the NLRP3 inflammasome: dephosphorylation by protein phosphatase 2A (PP2A) promotes assembly of the NLRP3 inflammasome. Phosphorylation at Ser-293 by PKD/PRKD1 promotes NLRP3 inflammasome assembly. Phosphorylation by ERK1/MAPK3 promotes NLRP3 inflammasome assembly. Phosphorylation by BTK (at Tyr-134, Tyr-138 and Tyr-166) in the region that mediates binding to phosphatidylinositol phosphate, promotes relocalization of NLRP3 and assembly of the NLRP3 inflammasome. Phosphorylation at Tyr-860 inhibits NLRP3 inflammasome assembly: dephosphorylation by PTPN22 promotes inflammasome activation. Phosphorylated by LATS1 and LATS2 at Ser-263 following palmitoylation by ZDHHC1, promoting its relocalization to the microtubule organizing center (MTOC), where NLRP3 is activated by NEK7, leading to inflammasome assembly and activation. Ubiquitinated; undergoes both 'Lys-48'- and 'Lys-63'-linked polyubiquitination. Ubiquitination does not lead to degradation, but inhibits inflammasome activation. Deubiquitination is catalyzed by BRCC3 and associated with NLRP3 activation and inflammasome assembly. This process can be induced by the activation of Toll-like receptors (by LPS), through a non-transcriptional pathway dependent on the mitochondrial production of reactive oxygen species, and by ATP. Ubiquitinated by TRIM31 via 'Lys-48'-linked ubiquitination, leading to its degradation by the proteasome. Ubiquitinated at Lys-689 by the SCF(FBXL2) complex, leading to its degradation by the proteasome. Ubiquitinated by TRIM35 via 'lys-48' and 'Lys-63'-linked ubiquitination leading to inhibition of NLRP3 inflammasome activation. Undergoes 'Lys-27'-linked polyubiquitination by MARCHF5, leading to NLRP3-NEK7 complex formation and NLRP3 oligomerization. In terms of processing, the disulfide bond in the pyrin domain might play a role in reactive oxygen species-mediated activation. Post-translationally, palmitoylation by ZDHHC12 promotes NLRP3 degradation by the chaperone-mediated autophagy pathway (CMA) and therefore limits NLRP3 inflammasome activation. Interaction with ZDHHC12, and hence NLRP3 palmitoylation, is greatly enhanced by ABHD8. Following palmitoylation, HSPA8/HSC70 recognizes and binds the KFERQ-like motifs on NLRP3 and promotes NLRP3 recruitment to lysosomes, where it is degraded via the chaperone-mediated autophagy pathway in a LAMP2-dependent process. Palmitoylation at Cys-836 and Cys-837 by ZDHHC5 enhances its binding to NEK7 leading to inflammasome assembly and activation. Palmitoylation at Cys-128 and Cys-957 by ZDHHC1 facilitates phosphorylation at Ser-263 by LATS1 and LATS2, promoting its relocalization to the microtubule organizing center (MTOC), where NLRP3 is activated by NEK7, leading to inflammasome assembly and activation. Depalmitoylated by ABHD17A. Degraded via selective autophagy following interaction with IRGM. IRGM promotes NLRP3 recruitment to autophagosome membranes, promoting its SQSTM1/p62-dependent autophagy-dependent degradation.

The protein localises to the cytoplasm. It is found in the cytosol. The protein resides in the inflammasome. Its subcellular location is the cytoskeleton. It localises to the microtubule organizing center. The protein localises to the golgi apparatus membrane. It is found in the endoplasmic reticulum. The protein resides in the mitochondrion. Its subcellular location is the secreted. It localises to the nucleus. It carries out the reaction ATP + H2O = ADP + phosphate + H(+). Under resting conditions, NLRP3 binds ADP and is autoinhibited. Inactive NLRP3 forms homodecameric double-ring cages that hide pyrin domains within NACHT-LRR rings to avoid premature activation. NLRP3 activation stimuli include extracellular ATP, nigericin, reactive oxygen species, crystals of monosodium urate or cholesterol, amyloid-beta fibers, environmental or industrial particles and nanoparticles, such as asbestos, silica, aluminum salts, cytosolic dsRNA, etc. Almost all stimuli trigger intracellular K(+) efflux. These stimuli lead to membrane perturbations that induce activation of NLRP3. Upon activation, NLRP3 is transported to microtubule organizing center (MTOC), where it is unlocked by NEK7, leading to its relocalization to dispersed trans-Golgi network (dTGN) vesicle membranes and recruitment of PYCARD/ASC for the formation of an active inflammasome complex. NEK7-activated NLRP3 forms a disk-shaped inflammasome. NLRP3 and PYCARD/ASC interact via their respective pyrin domains; interaction initiates speck formation (nucleation) which greatly enhances further addition of soluble PYCARD/ASC molecules to the speck in a prion-like polymerization process. Clustered PYCARD/ASC nucleates the formation of CASP1 filaments through the interaction of their respective CARD domains, acting as a platform for CASP1 polymerization and activation. Active CASP1 then processes IL1B and IL18 precursors, leading to the release of mature cytokines in the extracellular milieu and inflammatory response. NLRP3 inflammasome assembly is inhibited by IRGM, which impedes NLRP3 oligomerization. NLRP3 inflammasome is inhibited by cyclic AMP (cAMP), which directly binds NLRP3; inhibition is relieved by calcium-sensing receptor CASR, which inhibits production of cAMP. Specifically inhibited by sulfonylurea MCC950 (also named CP-456,773, CRID3), a potent and specific small-molecule inhibitor of the NLRP3 inflammasome that acts by preventing ATP hydrolysis. In terms of biological role, sensor component of the NLRP3 inflammasome, which mediates inflammasome activation in response to defects in membrane integrity, leading to secretion of inflammatory cytokines IL1B and IL18 and pyroptosis. In response to pathogens and other damage-associated signals that affect the integrity of membranes, initiates the formation of the inflammasome polymeric complex composed of NLRP3, CASP1 and PYCARD/ASC. Recruitment of pro-caspase-1 (proCASP1) to the NLRP3 inflammasome promotes caspase-1 (CASP1) activation, which subsequently cleaves and activates inflammatory cytokines IL1B and IL18 and gasdermin-D (GSDMD), promoting cytokine secretion and pyroptosis. Activation of NLRP3 inflammasome is also required for HMGB1 secretion; stimulating inflammatory responses. Under resting conditions, ADP-bound NLRP3 is autoinhibited. NLRP3 activation stimuli include extracellular ATP, nigericin, reactive oxygen species, crystals of monosodium urate or cholesterol, amyloid-beta fibers, environmental or industrial particles and nanoparticles, such as asbestos, silica, aluminum salts, cytosolic dsRNA, etc. Almost all stimuli trigger intracellular K(+) efflux. These stimuli lead to membrane perturbation and activation of NLRP3. Upon activation, NLRP3 is transported to microtubule organizing center (MTOC), where it is unlocked by NEK7, leading to its relocalization to dispersed trans-Golgi network (dTGN) vesicle membranes and formation of an active inflammasome complex. Associates with dTGN vesicle membranes by binding to phosphatidylinositol 4-phosphate (PtdIns4P). Shows ATPase activity. Its function is as follows. Independently of inflammasome activation, regulates the differentiation of T helper 2 (Th2) cells and has a role in Th2 cell-dependent asthma and tumor growth. During Th2 differentiation, required for optimal IRF4 binding to IL4 promoter and for IRF4-dependent IL4 transcription. Binds to the consensus DNA sequence 5'-GRRGGNRGAG-3'. May also participate in the transcription of IL5, IL13, GATA3, CCR3, CCR4 and MAF. In Rattus norvegicus (Rat), this protein is NACHT, LRR and PYD domains-containing protein 3.